The sequence spans 537 residues: Beta-arabinofuranosyltransferase RAY1 (537 aa).

A DXD motif motif is present at residues 370–372 (DVD).

It belongs to the glycosyltransferase 77 family.

Functionally, beta-arabinofuranosyltransferase that transfers specifically an arabinosyl residue from UDP-arabinofuranose to the monosaccharide galactose or beta-methyl-galactoside in vitro. Catalyzes the addition of a beta-arabinofuranose residue onto a beta-galactosyl residue of an Yariv-precipitable wall polymer in vivo. In Arabidopsis thaliana (Mouse-ear cress), this protein is Beta-arabinofuranosyltransferase RAY1.